The sequence spans 2620 residues: Highly reducing polyketide synthase tazB (2620 aa).

Residues 1–22 (MPFLNGNTTHHEAHSAEPDHGN) form a disordered region. Residues 1 to 416 (MPFLNGNTTH…GTNAHCILDD (416 aa)) form the Ketosynthase family 3 (KS3) domain. The span at 9–22 (THHEAHSAEPDHGN) shows a compositional bias: basic and acidic residues. Active-site for beta-ketoacyl synthase activity residues include cysteine 166, histidine 301, and histidine 340. The interval 460-481 (GFNKFDEPRGSDSAGSNANGSH) is disordered. The segment covering 470-481 (SDSAGSNANGSH) has biased composition (low complexity). The segment at 601–923 (VFTGQGAQYA…PYLATLSRKD (323 aa)) is malonyl-CoA:ACP transacylase (MAT) domain. Residues 993–1128 (HDLFGAPVPD…GEVSPDLKKS (136 aa)) are N-terminal hotdog fold. A dehydratase (DH) domain region spans residues 993–1313 (HDLFGAPVPD…LAGIRLSPFK (321 aa)). Residues 993 to 1318 (HDLFGAPVPD…LSPFKPESSE (326 aa)) form the PKS/mFAS DH domain. Histidine 1025 (proton acceptor; for dehydratase activity) is an active-site residue. The segment at 1157-1318 (TAPVDFTPVY…LSPFKPESSE (162 aa)) is C-terminal hotdog fold. Aspartate 1225 serves as the catalytic Proton donor; for dehydratase activity. The interval 1379 to 1680 (GLRESREMKD…VDFEASSSIY (302 aa)) is methyltransferase (CMet) domain. Positions 1910–2227 (GIDSLTWVTD…TGKSIGKVTL (318 aa)) are enoyl reductase (ER) domain. The segment at 2251 to 2425 (SFILAGGLGG…HGASVNLGAV (175 aa)) is ketoreductase (KR) domain. A Carrier domain is found at 2539–2620 (EAARIIHKAL…VSLSSFTKFR (82 aa)). Position 2576 is an O-(pantetheine 4'-phosphoryl)serine (serine 2576).

Its pathway is secondary metabolite biosynthesis. Functionally, highly reducing polyketide synthase; part of the gene cluster that mediates the biosynthesis of azaterrilone A and other azaphilones, a class of fungal metabolites characterized by a highly oxygenated pyrano-quinone bicyclic core and exhibiting a broad range of bioactivities. The first step of the pathway begins with the non-reducing polyketide synthase tazA that assembles one acetyl-CoA starter unit, five malonyl-CoA units, and catalyzes a series of Claisen condensations, methylation, PT-mediated cyclization, and finally releases the first hexaketide precursor through the R-domain. The tazA product then undergoes reduction on its terminal ketone and the following pyran-ring formation by yet undetermined enzyme(s). Dehydration and enoyl reduction, possibly involving the trans-enoyl reductase tazE leads to the next intermediate. TazD is predicted as an acetyltransferase and might catalyze the acetylation steps leading to the synthesis of azaterrilone A. Azaterrilone A is not the final product of the taz pathway and both the highly reducing polyketide synthase tazB and the dual enzyme tazHJ catalyze late steps of the pathway, leading to the production of the 2 final stereoisomers that contain additional polyketide modification whose structures have still to be determined. The chain is Highly reducing polyketide synthase tazB from Aspergillus terreus (strain NIH 2624 / FGSC A1156).